We begin with the raw amino-acid sequence, 427 residues long: 3-phosphoshikimate 1-carboxyvinyltransferase (427 aa).

Residues Lys-23, Ser-24, and Arg-28 each contribute to the 3-phosphoshikimate site. Lys-23 lines the phosphoenolpyruvate pocket. Residues Gly-97 and Arg-125 each coordinate phosphoenolpyruvate. Residues Ser-170, Ser-171, Gln-172, Ser-198, Asp-314, Asn-337, and Lys-341 each contribute to the 3-phosphoshikimate site. Gln-172 contributes to the phosphoenolpyruvate binding site. Asp-314 functions as the Proton acceptor in the catalytic mechanism. Phosphoenolpyruvate contacts are provided by Arg-345, Arg-387, and Lys-412.

It belongs to the EPSP synthase family. Monomer.

It is found in the cytoplasm. It catalyses the reaction 3-phosphoshikimate + phosphoenolpyruvate = 5-O-(1-carboxyvinyl)-3-phosphoshikimate + phosphate. Its pathway is metabolic intermediate biosynthesis; chorismate biosynthesis; chorismate from D-erythrose 4-phosphate and phosphoenolpyruvate: step 6/7. Functionally, catalyzes the transfer of the enolpyruvyl moiety of phosphoenolpyruvate (PEP) to the 5-hydroxyl of shikimate-3-phosphate (S3P) to produce enolpyruvyl shikimate-3-phosphate and inorganic phosphate. In Buchnera aphidicola subsp. Baizongia pistaciae (strain Bp), this protein is 3-phosphoshikimate 1-carboxyvinyltransferase.